The chain runs to 112 residues: uncharacterized protein (112 aa).

Residues 6–60 (LRQLRKAHKLTMEQLAEKIGIAKSSYGGYEAESKKPPLDKLVILARLYDVSVDYI) form the HTH cro/C1-type domain. Positions 17 to 36 (MEQLAEKIGIAKSSYGGYEA) form a DNA-binding region, H-T-H motif.

This is an uncharacterized protein from Bacillus subtilis (strain 168).